The following is a 179-amino-acid chain: Large ribosomal subunit protein bL9 (179 aa).

The segment at 156 to 179 (PEGAPVPVAEEPAAEAEQAEVAAE) is disordered. Positions 157 to 166 (EGAPVPVAEE) are enriched in low complexity. Positions 167-179 (PAAEAEQAEVAAE) are enriched in acidic residues.

Belongs to the bacterial ribosomal protein bL9 family.

Its function is as follows. Binds to the 23S rRNA. The polypeptide is Large ribosomal subunit protein bL9 (Porphyromonas gingivalis (strain ATCC 33277 / DSM 20709 / CIP 103683 / JCM 12257 / NCTC 11834 / 2561)).